Reading from the N-terminus, the 425-residue chain is Glutamyl-tRNA reductase (425 aa).

Substrate is bound by residues 51–54 (TCNR), serine 111, 116–118 (DMQ), and glutamine 122. The active-site Nucleophile is cysteine 52. 191–196 (GLGEIG) serves as a coordination point for NADP(+).

The protein belongs to the glutamyl-tRNA reductase family. In terms of assembly, homodimer.

It carries out the reaction (S)-4-amino-5-oxopentanoate + tRNA(Glu) + NADP(+) = L-glutamyl-tRNA(Glu) + NADPH + H(+). It functions in the pathway porphyrin-containing compound metabolism; protoporphyrin-IX biosynthesis; 5-aminolevulinate from L-glutamyl-tRNA(Glu): step 1/2. Catalyzes the NADPH-dependent reduction of glutamyl-tRNA(Glu) to glutamate 1-semialdehyde (GSA). In Cytophaga hutchinsonii (strain ATCC 33406 / DSM 1761 / CIP 103989 / NBRC 15051 / NCIMB 9469 / D465), this protein is Glutamyl-tRNA reductase.